The sequence spans 183 residues: Acireductone dioxygenase (183 aa).

The Fe(2+) site is built by histidine 99, histidine 101, glutamate 105, and histidine 144. Ni(2+) contacts are provided by histidine 99, histidine 101, glutamate 105, and histidine 144.

It belongs to the acireductone dioxygenase (ARD) family. In terms of assembly, monomer. It depends on Fe(2+) as a cofactor. Ni(2+) is required as a cofactor.

It catalyses the reaction 1,2-dihydroxy-5-(methylsulfanyl)pent-1-en-3-one + O2 = 3-(methylsulfanyl)propanoate + CO + formate + 2 H(+). The enzyme catalyses 1,2-dihydroxy-5-(methylsulfanyl)pent-1-en-3-one + O2 = 4-methylsulfanyl-2-oxobutanoate + formate + 2 H(+). It functions in the pathway amino-acid biosynthesis; L-methionine biosynthesis via salvage pathway; L-methionine from S-methyl-5-thio-alpha-D-ribose 1-phosphate: step 5/6. Catalyzes 2 different reactions between oxygen and the acireductone 1,2-dihydroxy-3-keto-5-methylthiopentene (DHK-MTPene) depending upon the metal bound in the active site. Fe-containing acireductone dioxygenase (Fe-ARD) produces formate and 2-keto-4-methylthiobutyrate (KMTB), the alpha-ketoacid precursor of methionine in the methionine recycle pathway. Ni-containing acireductone dioxygenase (Ni-ARD) produces methylthiopropionate, carbon monoxide and formate, and does not lie on the methionine recycle pathway. This Microcystis aeruginosa protein is Acireductone dioxygenase.